We begin with the raw amino-acid sequence, 2346 residues long: Acetyl-CoA carboxylase 1 (2346 aa).

M1 is modified (N-acetylmethionine). Phosphoserine is present on residues S5, S23, S25, S29, S34, S48, S50, and S53. T58 carries the post-translational modification Phosphothreonine. At S78 the chain carries Phosphoserine. S80 bears the Phosphoserine; by AMPK mark. In terms of domain architecture, Biotin carboxylation spans 117–618 (VIEKVLIANN…DTGWLDRLIA (502 aa)). One can recognise an ATP-grasp domain in the interval 275–466 (SKRILNVPQE…LPAAQLQIAM (192 aa)). 315-320 (GGGGKG) contacts ATP. Positions 424, 437, and 439 each coordinate Mg(2+). Mn(2+) is bound by residues E424, E437, and N439. R441 is a catalytic residue. T610 carries the phosphothreonine modification. The Biotinyl-binding domain maps to 745-819 (FEKENDPSVL…DPGCVIAKMQ (75 aa)). K786 bears the N6-biotinyllysine mark. A phosphoserine mark is found at S835, S1201, S1216, and S1218. T1227 is subject to Phosphothreonine. Residues S1259, S1263, and S1273 each carry the phosphoserine modification. Position 1334 is an N6-acetyllysine (K1334). The CoA carboxyltransferase N-terminal domain maps to 1576–1914 (PYVTKDLLQS…SVYSSVPLLN (339 aa)). A carboxyltransferase region spans residues 1576–2234 (PYVTKDLLQS…EDLVKKKIHN (659 aa)). Positions 1823, 2127, and 2129 each coordinate CoA. The 317-residue stretch at 1918-2234 (PIDRVIEFVP…EDLVKKKIHN (317 aa)) folds into the CoA carboxyltransferase C-terminal domain. A Phosphothreonine modification is found at T2153.

As to quaternary structure, monomer, homodimer, and homotetramer. Can form filamentous polymers. Interacts in its inactive phosphorylated form with the BRCT domains of BRCA1 which prevents ACACA dephosphorylation and inhibits lipid synthesis. Interacts with MID1IP1; interaction with MID1IP1 promotes oligomerization and increases its activity. Mg(2+) is required as a cofactor. The cofactor is Mn(2+). It depends on biotin as a cofactor. In terms of processing, phosphorylation on Ser-1263 is required for interaction with BRCA1. Post-translationally, phosphorylation at Ser-80 by AMPK inactivates enzyme activity. The biotin cofactor is covalently attached to the central biotinyl-binding domain and is required for the catalytic activity. In terms of tissue distribution, expressed at high levels in mammary gland.

It is found in the cytoplasm. The protein resides in the cytosol. The enzyme catalyses hydrogencarbonate + acetyl-CoA + ATP = malonyl-CoA + ADP + phosphate + H(+). It functions in the pathway lipid metabolism; malonyl-CoA biosynthesis; malonyl-CoA from acetyl-CoA: step 1/1. With respect to regulation, inhibited by phosphorylation. Citrate promotes oligomerization of the protein into filaments that correspond to the most active form of the carboxylase. Its function is as follows. Cytosolic enzyme that catalyzes the carboxylation of acetyl-CoA to malonyl-CoA, the first and rate-limiting step of de novo fatty acid biosynthesis. This is a 2 steps reaction starting with the ATP-dependent carboxylation of the biotin carried by the biotin carboxyl carrier (BCC) domain followed by the transfer of the carboxyl group from carboxylated biotin to acetyl-CoA. This is Acetyl-CoA carboxylase 1 from Ovis aries (Sheep).